Reading from the N-terminus, the 218-residue chain is Ribose-5-phosphate isomerase A (218 aa).

Residues 28–31 (TGST), 81–84 (DGAD), and 94–97 (KGGG) contribute to the substrate site. Catalysis depends on Glu103, which acts as the Proton acceptor. Lys121 serves as a coordination point for substrate.

This sequence belongs to the ribose 5-phosphate isomerase family. In terms of assembly, homodimer.

The catalysed reaction is aldehydo-D-ribose 5-phosphate = D-ribulose 5-phosphate. It functions in the pathway carbohydrate degradation; pentose phosphate pathway; D-ribose 5-phosphate from D-ribulose 5-phosphate (non-oxidative stage): step 1/1. Catalyzes the reversible conversion of ribose-5-phosphate to ribulose 5-phosphate. This chain is Ribose-5-phosphate isomerase A, found in Proteus mirabilis (strain HI4320).